Consider the following 117-residue polypeptide: NADH-ubiquinone oxidoreductase chain 3 (117 aa).

Helical transmembrane passes span 4–24 (IIII…LASI), 60–80 (ITII…MIII), and 86–106 (IMIW…GLYH).

Belongs to the complex I subunit 3 family.

It localises to the mitochondrion membrane. The enzyme catalyses a ubiquinone + NADH + 5 H(+)(in) = a ubiquinol + NAD(+) + 4 H(+)(out). Core subunit of the mitochondrial membrane respiratory chain NADH dehydrogenase (Complex I) that is believed to belong to the minimal assembly required for catalysis. Complex I functions in the transfer of electrons from NADH to the respiratory chain. The immediate electron acceptor for the enzyme is believed to be ubiquinone. The sequence is that of NADH-ubiquinone oxidoreductase chain 3 (mt:ND3) from Drosophila yakuba (Fruit fly).